The primary structure comprises 230 residues: Porin OmpL (230 aa).

The first 20 residues, 1–20, serve as a signal peptide directing secretion; sequence MKSLNTLVILTSVISTSVFA.

Belongs to the oligogalacturonate-specific porin KdgM (TC 1.B.35) family. OmpL subfamily.

It is found in the cell outer membrane. In terms of biological role, outer membrane channel protein that allows an efficient diffusion of low-molecular-weight solutes such as small sugars and tetraglycine. However, the specific substrate recognized by the OmpL channel is unknown. The polypeptide is Porin OmpL (ompL) (Salmonella typhi).